The primary structure comprises 155 residues: SsrA-binding protein (155 aa).

It belongs to the SmpB family.

The protein localises to the cytoplasm. Its function is as follows. Required for rescue of stalled ribosomes mediated by trans-translation. Binds to transfer-messenger RNA (tmRNA), required for stable association of tmRNA with ribosomes. tmRNA and SmpB together mimic tRNA shape, replacing the anticodon stem-loop with SmpB. tmRNA is encoded by the ssrA gene; the 2 termini fold to resemble tRNA(Ala) and it encodes a 'tag peptide', a short internal open reading frame. During trans-translation Ala-aminoacylated tmRNA acts like a tRNA, entering the A-site of stalled ribosomes, displacing the stalled mRNA. The ribosome then switches to translate the ORF on the tmRNA; the nascent peptide is terminated with the 'tag peptide' encoded by the tmRNA and targeted for degradation. The ribosome is freed to recommence translation, which seems to be the essential function of trans-translation. This Geobacillus kaustophilus (strain HTA426) protein is SsrA-binding protein.